We begin with the raw amino-acid sequence, 181 residues long: MNGFSTEEDSRDGPPAQAAPFFGQTCCLIDGGERCPRPAGNASFSKRVQKSISQKKLKLDIDKSVRHLYICDFHKNYIQSVRNKRKRKTSDDGGDSPEHETDVPEVDLFQLQVNTLRRYKRYYKLQTRPGLNKAQLAETVSRHFRNIPVNEKETLAYFIYMVKSNRSRLDQKSESSKQLEA.

The Atypical zinc finger occupies 26 to 74 (CCLIDGGERCPRPAGNASFSKRVQKSISQKKLKLDIDKSVRHLYICDFH). Positions 82-103 (RNKRKRKTSDDGGDSPEHETDV) are disordered. Positions 83–88 (NKRKRK) match the Nuclear localization signal (NLS) motif. An important for DNA and phosphoinositide binding region spans residues 85-87 (RKR).

This sequence belongs to the SAP30 family. As to quaternary structure, interacts with components of the histone deacetylase complex sin3a, hdac1 and hdac2. Binds histones and nucleosomes.

The protein localises to the nucleus. Its subcellular location is the nucleolus. In terms of biological role, functions as a transcription repressor, probably via its interaction with histone deacetylase complexes. Involved in the functional recruitment of the class 1 Sin3-histone deacetylase complex (HDAC) to the nucleolus. Binds DNA, apparently without sequence-specificity, and bends bound double-stranded DNA. Binds phosphoinositol phosphates (phosphoinositol 3-phosphate, phosphoinositol 4-phosphate and phosphoinositol 5-phosphate) via the same basic sequence motif that mediates DNA binding and nuclear import. The sequence is that of Histone deacetylase complex subunit SAP30L (sap30l) from Xenopus tropicalis (Western clawed frog).